Reading from the N-terminus, the 468-residue chain is Lactate utilization protein B (468 aa).

2 4Fe-4S ferredoxin-type domains span residues 303 to 333 and 352 to 381; these read GTQFQSVLQCIRCAACINVCPVYRHIGGHAY and YENYKELPYASSLCGACTEACPVKIPLHEL. [4Fe-4S] cluster-binding residues include Cys312, Cys315, Cys318, Cys322, Cys365, Cys368, and Cys372. Residues 442 to 468 form a disordered region; that stretch reads PAWTDSKDLPQPNKQTVRDWFKKRGNA. Over residues 457 to 468 the composition is skewed to basic and acidic residues; the sequence is TVRDWFKKRGNA.

It belongs to the LutB/YkgF family.

Is involved in L-lactate degradation and allows cells to grow with lactate as the sole carbon source. Has probably a role as an electron transporter during oxidation of L-lactate. This is Lactate utilization protein B from Exiguobacterium sp. (strain ATCC BAA-1283 / AT1b).